Reading from the N-terminus, the 741-residue chain is NAD(P)H-quinone oxidoreductase subunit 5, chloroplastic (741 aa).

15 helical membrane-spanning segments follow: residues 9 to 29, 40 to 60, 89 to 109, 125 to 145, 147 to 167, 185 to 205, 219 to 239, 258 to 278, 280 to 300, 327 to 347, 396 to 416, 425 to 445, 547 to 567, 606 to 626, and 721 to 741; these read WIIP…LLLF, WAVP…ELAI, IDPL…LVLI, FSYL…SNLI, IYIF…FWFA, GDFG…SFEF, NGVN…GAVA, TPIS…FLVA, LLPL…IGVI, LGYI…FHLI, TTFF…CFWS, WLYS…TAFY, LLPL…GIPF, ILSV…YGSV, and SYIF…YFFI.

The protein belongs to the complex I subunit 5 family. In terms of assembly, NDH is composed of at least 16 different subunits, 5 of which are encoded in the nucleus.

The protein resides in the plastid. The protein localises to the chloroplast thylakoid membrane. It carries out the reaction a plastoquinone + NADH + (n+1) H(+)(in) = a plastoquinol + NAD(+) + n H(+)(out). The catalysed reaction is a plastoquinone + NADPH + (n+1) H(+)(in) = a plastoquinol + NADP(+) + n H(+)(out). NDH shuttles electrons from NAD(P)H:plastoquinone, via FMN and iron-sulfur (Fe-S) centers, to quinones in the photosynthetic chain and possibly in a chloroplast respiratory chain. The immediate electron acceptor for the enzyme in this species is believed to be plastoquinone. Couples the redox reaction to proton translocation, and thus conserves the redox energy in a proton gradient. In Ceratophyllum demersum (Rigid hornwort), this protein is NAD(P)H-quinone oxidoreductase subunit 5, chloroplastic (ndhF).